The primary structure comprises 529 residues: UDP-glucuronosyltransferase 2B23 (529 aa).

A signal peptide spans 1 to 24 (MSVKWTSVILLIQLSFYFSSGSCG). N-linked (GlcNAc...) asparagine glycosylation is found at asparagine 67 and asparagine 68. Residues 494 to 514 (IGFLLACVATVIFIIMKCCLF) form a helical membrane-spanning segment.

This sequence belongs to the UDP-glycosyltransferase family. As to expression, expressed in several tissues, including the prostate, mammary gland, epididymis, testis and ovary.

The protein localises to the microsome membrane. It is found in the endoplasmic reticulum membrane. It catalyses the reaction glucuronate acceptor + UDP-alpha-D-glucuronate = acceptor beta-D-glucuronoside + UDP + H(+). UDPGTs are of major importance in the conjugation and subsequent elimination of potentially toxic xenobiotics and endogenous compounds. This isozyme has glucuronidating capacity on 6 steroids and the bile acid, hyodeoxycholic acid. May potentially play an important role in estrogen and androgen catabolism in peripheral steroid target tissues. The chain is UDP-glucuronosyltransferase 2B23 (UGT2B23) from Macaca fascicularis (Crab-eating macaque).